The chain runs to 441 residues: CBL-interacting serine/threonine-protein kinase 3 (441 aa).

Positions 14–269 (YEVGRTIGEG…PQEVFEDEWF (256 aa)) constitute a Protein kinase domain. ATP contacts are provided by residues 20-28 (IGEGTFAKV) and Lys-43. Residue Asp-137 is the Proton acceptor of the active site. An activation loop region spans residues 155-184 (DFGLSALSQQVRDDGLLHTSCGTPNYVAPE). Positions 307–331 (EQPAAINAFEIISMSRGLNLENLFD) constitute an NAF domain. The segment at 337 to 366 (KRETRITLRGGANEIIEKIEEAAKPLGFDV) is PPI.

This sequence belongs to the protein kinase superfamily. CAMK Ser/Thr protein kinase family. SNF1 subfamily. As to quaternary structure, interacts with CBL3 and CBL9. The cofactor is Mn(2+). Mostly expressed in germinating seeds and young seedlings. Detected at low levels in roots, stems, leaves and flowers.

It carries out the reaction L-seryl-[protein] + ATP = O-phospho-L-seryl-[protein] + ADP + H(+). The catalysed reaction is L-threonyl-[protein] + ATP = O-phospho-L-threonyl-[protein] + ADP + H(+). Its function is as follows. Involved in the resistance to some abiotic stresses (e.g. high salt, hyperosmotic stress) in young seedlings, by regulating the expression of several stress-inducible genes (cold- and salt-induced genes but not drought-responsive genes). Required for the ABA response during germination. CIPK serine-threonine protein kinases interact with CBL proteins. Binding of a CBL protein to the regulatory NAF domain of CIPK protein lead to the activation of the kinase in a calcium-dependent manner. The CBL9/CIPK3 complex acts in the regulation of abscisic acid response in seed germination. The sequence is that of CBL-interacting serine/threonine-protein kinase 3 (CIPK3) from Arabidopsis thaliana (Mouse-ear cress).